The following is a 531-amino-acid chain: L-aspartate oxidase (531 aa).

FAD-binding positions include serine 11 to alanine 14, lysine 33, asparagine 40 to glycine 47, threonine 151 to alanine 152, and aspartate 205. The Proton donor/acceptor role is filled by arginine 272. FAD contacts are provided by residues glutamate 353 and serine 369–leucine 370.

Belongs to the FAD-dependent oxidoreductase 2 family. NadB subfamily. In terms of assembly, monomer. Homodimer. Requires FAD as cofactor.

It localises to the cytoplasm. The catalysed reaction is L-aspartate + O2 = iminosuccinate + H2O2. The enzyme catalyses fumarate + L-aspartate = iminosuccinate + succinate. The protein operates within cofactor biosynthesis; NAD(+) biosynthesis; iminoaspartate from L-aspartate (oxidase route): step 1/1. In terms of biological role, catalyzes the oxidation of L-aspartate to iminoaspartate, the first step in the de novo biosynthesis of NAD(+). Can use either oxygen or fumarate as electron acceptors, which allows the enzyme to be functional under aerobic and anaerobic conditions. The protein is L-aspartate oxidase of Bacillus subtilis (strain 168).